The chain runs to 353 residues: UPF0324 membrane protein PP_3661 (353 aa).

The next 8 membrane-spanning stretches (helical) occupy residues 20-42, 70-92, 105-127, 137-159, 166-188, 234-253, 266-288, and 326-348; these read LNGI…MPAI, ASWA…AFFG, WSGL…WCGM, ALLT…ESAL, SAMA…PLAI, MTRV…WISR, IAMP…QVLP, and ALAT…TLGV.

It belongs to the UPF0324 family.

Its subcellular location is the cell membrane. The chain is UPF0324 membrane protein PP_3661 from Pseudomonas putida (strain ATCC 47054 / DSM 6125 / CFBP 8728 / NCIMB 11950 / KT2440).